Reading from the N-terminus, the 131-residue chain is MSWQAYVDEHLMCEIEGHHLASAAILGHDGTVWAQSADFPQFKPEEITGIMKDFDEPGHLAPTGMFVATAKYMVIQGEPGAVIRGKKGAGGITIKKTGQALVVGIYDEPMTPGQCNMVVERLGDYLVKQGL.

An intrachain disulfide couples cysteine 13 to cysteine 115. An Involved in PIP2 interaction motif is present at residues alanine 81–threonine 97. Threonine 111 is subject to Phosphothreonine.

The protein belongs to the profilin family. As to quaternary structure, occurs in many kinds of cells as a complex with monomeric actin in a 1:1 ratio. In terms of processing, phosphorylated by MAP kinases.

Its subcellular location is the cytoplasm. The protein resides in the cytoskeleton. Binds to actin and affects the structure of the cytoskeleton. At high concentrations, profilin prevents the polymerization of actin, whereas it enhances it at low concentrations. The protein is Profilin-8 of Olea europaea (Common olive).